The sequence spans 187 residues: Elongation factor P (187 aa).

This sequence belongs to the elongation factor P family.

The protein resides in the cytoplasm. It functions in the pathway protein biosynthesis; polypeptide chain elongation. In terms of biological role, involved in peptide bond synthesis. Stimulates efficient translation and peptide-bond synthesis on native or reconstituted 70S ribosomes in vitro. Probably functions indirectly by altering the affinity of the ribosome for aminoacyl-tRNA, thus increasing their reactivity as acceptors for peptidyl transferase. The polypeptide is Elongation factor P (Frankia casuarinae (strain DSM 45818 / CECT 9043 / HFP020203 / CcI3)).